The chain runs to 267 residues: Undecaprenyl-diphosphatase (267 aa).

8 consecutive transmembrane segments (helical) span residues isoleucine 4–serine 24, asparagine 41–phenylalanine 61, isoleucine 84–phenylalanine 104, tyrosine 116–leucine 136, cysteine 160–leucine 180, tyrosine 185–leucine 205, glutamate 216–glycine 236, and threonine 246–cysteine 266.

This sequence belongs to the UppP family.

The protein localises to the cell membrane. The catalysed reaction is di-trans,octa-cis-undecaprenyl diphosphate + H2O = di-trans,octa-cis-undecaprenyl phosphate + phosphate + H(+). Its function is as follows. Catalyzes the dephosphorylation of undecaprenyl diphosphate (UPP). Confers resistance to bacitracin. The chain is Undecaprenyl-diphosphatase from Wigglesworthia glossinidia brevipalpis.